Consider the following 212-residue polypeptide: 3-isopropylmalate dehydratase small subunit 2 (212 aa).

Belongs to the LeuD family. LeuD type 1 subfamily. In terms of assembly, heterodimer of LeuC and LeuD.

It catalyses the reaction (2R,3S)-3-isopropylmalate = (2S)-2-isopropylmalate. It functions in the pathway amino-acid biosynthesis; L-leucine biosynthesis; L-leucine from 3-methyl-2-oxobutanoate: step 2/4. Catalyzes the isomerization between 2-isopropylmalate and 3-isopropylmalate, via the formation of 2-isopropylmaleate. The sequence is that of 3-isopropylmalate dehydratase small subunit 2 from Chromobacterium violaceum (strain ATCC 12472 / DSM 30191 / JCM 1249 / CCUG 213 / NBRC 12614 / NCIMB 9131 / NCTC 9757 / MK).